The chain runs to 129 residues: MEHPSTNYTLEQQHEKLKNYVLIPKHLWSYIKYGTHVRYYTKQNVFRVGGFVLQNPYEAVVKNEVKTAIRLQNSFNTKAKGHVTWAVSYDDISKLYAKPDAIMLTIQENVEKALHALNQNVLTLASKIR.

This sequence belongs to the asfivirus C129R family.

It is found in the virion. Its function is as follows. Plays a role in the inhibition of type I interferon signaling pathway. Mechanistically, specifically interacts with 2',3'-cGAMP and cleaves it via its phosphodiesterase activity. In turn, prevents 2',3'-cGAMP interaction with host ER-resident STING1 leading to inhibition of downstream signaling pathway and type I interferon production. This is an uncharacterized protein from Ornithodoros (relapsing fever ticks).